Consider the following 98-residue polypeptide: NADH-ubiquinone oxidoreductase chain 4L (98 aa).

3 helical membrane-spanning segments follow: residues Pro2–Phe22, Ser29–Met49, and Ile61–Val81.

Belongs to the complex I subunit 4L family. As to quaternary structure, core subunit of respiratory chain NADH dehydrogenase (Complex I) which is composed of 45 different subunits.

The protein localises to the mitochondrion inner membrane. The enzyme catalyses a ubiquinone + NADH + 5 H(+)(in) = a ubiquinol + NAD(+) + 4 H(+)(out). Core subunit of the mitochondrial membrane respiratory chain NADH dehydrogenase (Complex I) which catalyzes electron transfer from NADH through the respiratory chain, using ubiquinone as an electron acceptor. Part of the enzyme membrane arm which is embedded in the lipid bilayer and involved in proton translocation. This Lepilemur mitsinjoensis (Mitsinjo sportive lemur) protein is NADH-ubiquinone oxidoreductase chain 4L (MT-ND4L).